Here is a 316-residue protein sequence, read N- to C-terminus: tRNA dimethylallyltransferase (316 aa).

An ATP-binding site is contributed by 17-24 (GPTASGKT). 19–24 (TASGKT) provides a ligand contact to substrate. 4 interaction with substrate tRNA regions span residues 42 to 45 (DSAL), 166 to 170 (QRLSR), 247 to 252 (RCVGYR), and 280 to 287 (KRQITWLR).

The protein belongs to the IPP transferase family. As to quaternary structure, monomer. Requires Mg(2+) as cofactor.

The enzyme catalyses adenosine(37) in tRNA + dimethylallyl diphosphate = N(6)-dimethylallyladenosine(37) in tRNA + diphosphate. In terms of biological role, catalyzes the transfer of a dimethylallyl group onto the adenine at position 37 in tRNAs that read codons beginning with uridine, leading to the formation of N6-(dimethylallyl)adenosine (i(6)A). The polypeptide is tRNA dimethylallyltransferase (Escherichia coli O45:K1 (strain S88 / ExPEC)).